The primary structure comprises 468 residues: Phenylalanine--tRNA ligase alpha subunit (468 aa).

Residues threonine 311, 350–352, and phenylalanine 390 each bind L-phenylalanine; that span reads QLD. Glutamate 392 contacts Mg(2+).

This sequence belongs to the class-II aminoacyl-tRNA synthetase family. Phe-tRNA synthetase alpha subunit type 2 subfamily. Tetramer of two alpha and two beta subunits. The cofactor is Mg(2+).

The protein localises to the cytoplasm. It carries out the reaction tRNA(Phe) + L-phenylalanine + ATP = L-phenylalanyl-tRNA(Phe) + AMP + diphosphate + H(+). The chain is Phenylalanine--tRNA ligase alpha subunit from Saccharolobus solfataricus (strain ATCC 35092 / DSM 1617 / JCM 11322 / P2) (Sulfolobus solfataricus).